The sequence spans 334 residues: Mitochondrial glycine transporter (334 aa).

3 Solcar repeats span residues 10-94 (SKSS…IRQA), 127-211 (LSNT…FKRR), and 234-318 (RAAA…LIMR). 6 consecutive transmembrane segments (helical) span residues 16-41 (FVAGLGSGVLSAALLQPIDLLKTRVQ), 69-95 (GTVPSALRTGFGSALYFSTLNAIRQAA), 133-158 (LLAGGVARGFAGFVLMPLTVIKVRYE), 186-209 (GFGATALRDAPYAGLYVLLYEQFK), 238-264 (VNFSSGVLAAVACSVVSNPFDAVKTRI), and 293-311 (GLGLRMSRKALSSALAWTL).

It belongs to the mitochondrial carrier (TC 2.A.29) family. SLC25A38 subfamily.

The protein localises to the mitochondrion inner membrane. The enzyme catalyses glycine(in) = glycine(out). Its function is as follows. Mitochondrial glycine transporter that imports glycine into the mitochondrial matrix. Plays an important role in providing glycine for the first enzymatic step in heme biosynthesis, the condensation of glycine with succinyl-CoA to produce 5-aminolevulinate (ALA) in the mitochondrial matrix. The sequence is that of Mitochondrial glycine transporter from Pyricularia oryzae (strain 70-15 / ATCC MYA-4617 / FGSC 8958) (Rice blast fungus).